The following is a 451-amino-acid chain: Lipase member H (451 aa).

Residues 1–16 form the signal peptide; it reads MLRLCFFISFMCLVKS. N-linked (GlcNAc...) asparagine glycosylation occurs at N66. S154 acts as the Nucleophile in catalysis. Residue D178 is the Charge relay system of the active site. A disulfide bridge links C233 with C246. The Charge relay system role is filled by H248. 3 cysteine pairs are disulfide-bonded: C270-C281, C284-C292, and C427-C446.

This sequence belongs to the AB hydrolase superfamily. Lipase family. In terms of assembly, interacts with TTMP/C3orf52. In terms of tissue distribution, expressed in placenta and colon. Weakly expressed in small intestine.

It localises to the secreted. The protein localises to the cell membrane. It carries out the reaction 1-hexadecanoyl-2-(9Z-octadecenoyl)-sn-glycero-3-phosphate + H2O = 2-(9Z-octadecenoyl)-sn-glycero-3-phosphate + hexadecanoate + H(+). In terms of biological role, hydrolyzes specifically phosphatidic acid (PA) to produce 2-acyl lysophosphatidic acid (LPA; a potent bioactive lipid mediator) and fatty acid. Does not hydrolyze other phospholipids, like phosphatidylserine (PS), phosphatidylcholine (PC) and phosphatidylethanolamine (PE) or triacylglycerol (TG). In Mus musculus (Mouse), this protein is Lipase member H (Liph).